We begin with the raw amino-acid sequence, 1284 residues long: ABC multidrug transporter atrC (1284 aa).

Residues 1-11 (MKSTAESKETP) show a composition bias toward basic and acidic residues. Residues 1 to 24 (MKSTAESKETPSQDESTTSVPCTE) form a disordered region. A run of 6 helical transmembrane segments spans residues 55–75 (AVAI…NLIF), 99–119 (AAEL…LSYT), 178–198 (IGLL…RLWC), 203–223 (TLIC…VAAV), 282–302 (LLGL…GLAF), and 320–340 (IFTV…LAPY). The ABC transmembrane type-1 1 domain occupies 55-346 (AVAILAACAS…LAPYSIEFSR (292 aa)). In terms of domain architecture, ABC transporter 1 spans 381-626 (VELENVTFSY…DGVYAGLVKI (246 aa)). N-linked (GlcNAc...) asparagine glycosylation is found at Asn-385 and Asn-401. 416 to 423 (GQSGSGKS) is a binding site for ATP. Asn-488 and Asn-632 each carry an N-linked (GlcNAc...) asparagine glycan. Transmembrane regions (helical) follow at residues 705–725 (LVVL…AILM) and 745–765 (FYAS…LAVG). Residues 705-992 (LVVLLGCLGG…LFQWSTSITK (288 aa)) enclose the ABC transmembrane type-1 2 domain. Asn-800 carries N-linked (GlcNAc...) asparagine glycosylation. Transmembrane regions (helical) follow at residues 824–844 (IALV…AIAF), 846–866 (WKLG…AGMV), 931–951 (MICF…GFWY), and 955–975 (LVSL…SVFF). Residue Asn-995 is glycosylated (N-linked (GlcNAc...) asparagine). The region spanning 1027–1280 (IAMDNVRFSY…GGLYRRMCEA (254 aa)) is the ABC transporter 2 domain. An ATP-binding site is contributed by 1062-1069 (GSSGCGKS). N-linked (GlcNAc...) asparagine glycosylation is present at Asn-1122.

It belongs to the ABC transporter superfamily. ABCB family. Multidrug resistance exporter (TC 3.A.1.201) subfamily.

The protein resides in the cell membrane. Pleiotropic ABC efflux transporter involved in the protection of the cells against a wide range of toxic compounds. This is ABC multidrug transporter atrC from Emericella nidulans (Aspergillus nidulans).